The sequence spans 881 residues: MKVTKPNWVEHTVGEKKAKTAIYSISVHPDGTRLATGGLDHKVKIWSTLPILDVEAEKEEENPKLLCTMSSHTGSVLSVRWAHHGRFLATGSDDQVIMIWGLDPDGGGRLWGSDEINVENWKALTRLVGHVADVVDLAWSRDDTMLASVGLDSTVWIWDGLTFERLRKLDLHQGFVKGVCWDPVGNYLATQSDDKTVKIWNTEDWSLAETISKPFETSPQSTFFRRLSWSPDGAFIAASNAMNGPVFVAAVIDREGWASDISFVGHENTIQVAAFNPRLFFPEGEPKGRATASSMLALGANDFSISIWRNTLYKPLVVLKDIFGADLMDLCWSNDGYVLYGSSVDGSVCAIQFEPSEFTDLADFSATELVLREYDYKPKRAHQPLAVHSSAASITNGFGPSTTTSTHVNVLQPKKGKAKRRVDLSNGNINAGPSAGPSRQALRPPPPVDPFSGPIQGFASPSTAQASTARMFEDAHRAFGPGSGSISGTSPRAGDKRKASGSYEDPTRGVRGRGMPVQQPIQQFEVQIIRAPMVAPSPSDAGPSKAYLPYPQVQSILRAQAIGNESRSIYLEARNTSDPKGENVLCYFADGEQRWMDYLPKAALAVTVTKNFCAAACEDGSLRVYSPAGRLILNMKLSGLVYDLQGEDKMLLIITMDCQVRVINVRNGKAFSPPSSIHHLLFPGSSSFHSFDIISCTVRPNGVPVIITSEPQAFAYDASLHEWSTIASPPIAGIQPLPSGPSGPLSVVDQIVAKSAPVTTTEKSNAPWIEESYVMSQFEMKLRGTVLLDSKEEHKHWLLGYMKYLGDENFAERAGEVMKDLIGPVYHQSKPTGWEPKLLGVDKREIAAEVLDVLSKTLQGKNVASVWYDVLDKMKADEGSW.

WD repeat units follow at residues 17-56, 71-110, 129-168, 171-210, 219-262, 265-318, and 322-363; these read KAKTAIYSISVHPDGTRLATGGLDHKVKIWSTLPILDVEA, SHTGSVLSVRWAHHGRFLATGSDDQVIMIWGLDPDGGGRL, GHVADVVDLAWSRDDTMLASVGLDSTVWIWDGLTFERLRK, LHQGFVKGVCWDPVGNYLATQSDDKTVKIWNTEDWSLAET, PQST…SDIS, GHEN…PLVV, and IFGA…DLAD. Polar residues-rich tracts occupy residues 398–409 and 459–468; these read FGPSTTTSTHVN and ASPSTAQAST. The disordered stretch occupies residues 398–514; sequence FGPSTTTSTH…DPTRGVRGRG (117 aa). 2 WD repeats span residues 588–635 and 688–733; these read FADG…ILNM and FHSF…PIAG.

The protein belongs to the WD repeat HIR1 family.

It localises to the nucleus. In terms of biological role, required for replication-independent chromatin assembly and for the periodic repression of histone gene transcription during the cell cycle. This Cryptococcus neoformans var. neoformans serotype D (strain B-3501A) (Filobasidiella neoformans) protein is Protein HIR1 (HIR1).